The primary structure comprises 140 residues: Large ribosomal subunit protein uL16 (140 aa).

It belongs to the universal ribosomal protein uL16 family. In terms of assembly, part of the 50S ribosomal subunit.

Functionally, binds 23S rRNA and is also seen to make contacts with the A and possibly P site tRNAs. In Onion yellows phytoplasma (strain OY-M), this protein is Large ribosomal subunit protein uL16.